A 565-amino-acid chain; its full sequence is Thiol:disulfide interchange protein DsbD (565 aa).

Residues 1-19 form the signal peptide; it reads MAQRIFTLILLLCSTSVFA. Cystine bridges form between C122–C128 and C182–C304. A run of 7 helical transmembrane segments spans residues 163–183, 208–228, 243–263, 296–316, 323–343, 365–385, and 386–406; these read LPFSALWALLIGIGIAFTPCV, LLTFIYVQGMALTYTALGLVV, YVLIGLAIVFTLLAMSMFGLF, IAGLICSPCTTAPLSAILLYI, WLGGGTLYLYALGMGLPLMLI, FGFVILALPVFLLERVIGDIW, and GLRLWSALGVAFFGGAFITSL. The Thioredoxin domain occupies 434–565; sequence WAFGATHTAQ…FSAHLRDRQP (132 aa). A disulfide bond links C480 and C483.

This sequence belongs to the thioredoxin family. DsbD subfamily.

Its subcellular location is the cell inner membrane. It carries out the reaction [protein]-dithiol + NAD(+) = [protein]-disulfide + NADH + H(+). The enzyme catalyses [protein]-dithiol + NADP(+) = [protein]-disulfide + NADPH + H(+). Functionally, required to facilitate the formation of correct disulfide bonds in some periplasmic proteins and for the assembly of the periplasmic c-type cytochromes. Acts by transferring electrons from cytoplasmic thioredoxin to the periplasm. This transfer involves a cascade of disulfide bond formation and reduction steps. The polypeptide is Thiol:disulfide interchange protein DsbD (Shigella dysenteriae serotype 1 (strain Sd197)).